The following is a 408-amino-acid chain: Na(+)-translocating NADH-quinone reductase subunit F (408 aa).

The chain crosses the membrane as a helical span at residues 4–24 (IYLGVGMFIAIVLALVLIIMF). In terms of domain architecture, 2Fe-2S ferredoxin-type spans 33-127 (GEVTISINGD…DMDIELPEEI (95 aa)). Residues cysteine 70, cysteine 76, cysteine 79, and cysteine 111 each contribute to the [2Fe-2S] cluster site. An FAD-binding FR-type domain is found at 130-270 (IKKWDCEVIS…SGPFGEFFAK (141 aa)).

This sequence belongs to the NqrF family. In terms of assembly, composed of six subunits; NqrA, NqrB, NqrC, NqrD, NqrE and NqrF. [2Fe-2S] cluster is required as a cofactor. The cofactor is FAD.

The protein resides in the cell inner membrane. It carries out the reaction a ubiquinone + n Na(+)(in) + NADH + H(+) = a ubiquinol + n Na(+)(out) + NAD(+). In terms of biological role, NQR complex catalyzes the reduction of ubiquinone-1 to ubiquinol by two successive reactions, coupled with the transport of Na(+) ions from the cytoplasm to the periplasm. The first step is catalyzed by NqrF, which accepts electrons from NADH and reduces ubiquinone-1 to ubisemiquinone by a one-electron transfer pathway. The polypeptide is Na(+)-translocating NADH-quinone reductase subunit F (Pseudoalteromonas atlantica (strain T6c / ATCC BAA-1087)).